The sequence spans 484 residues: Aspartyl/glutamyl-tRNA(Asn/Gln) amidotransferase subunit B (484 aa).

This sequence belongs to the GatB/GatE family. GatB subfamily. As to quaternary structure, heterotrimer of A, B and C subunits.

The catalysed reaction is L-glutamyl-tRNA(Gln) + L-glutamine + ATP + H2O = L-glutaminyl-tRNA(Gln) + L-glutamate + ADP + phosphate + H(+). It catalyses the reaction L-aspartyl-tRNA(Asn) + L-glutamine + ATP + H2O = L-asparaginyl-tRNA(Asn) + L-glutamate + ADP + phosphate + 2 H(+). Its function is as follows. Allows the formation of correctly charged Asn-tRNA(Asn) or Gln-tRNA(Gln) through the transamidation of misacylated Asp-tRNA(Asn) or Glu-tRNA(Gln) in organisms which lack either or both of asparaginyl-tRNA or glutaminyl-tRNA synthetases. The reaction takes place in the presence of glutamine and ATP through an activated phospho-Asp-tRNA(Asn) or phospho-Glu-tRNA(Gln). This Bordetella pertussis (strain Tohama I / ATCC BAA-589 / NCTC 13251) protein is Aspartyl/glutamyl-tRNA(Asn/Gln) amidotransferase subunit B.